A 380-amino-acid polypeptide reads, in one-letter code: Chaperone protein DnaJ (380 aa).

A J domain is found at 5–70 (DYYEVLGVER…SKRAAYDQYG (66 aa)). Residues 139–217 (GTTVNIRVPT…CHGEGRVEES (79 aa)) form a CR-type zinc finger. Zn(2+)-binding residues include Cys152, Cys155, Cys169, Cys172, Cys191, Cys194, Cys205, and Cys208. CXXCXGXG motif repeat units follow at residues 152–159 (CKPCDGSG), 169–176 (CPTCGGIG), 191–198 (CPRCHGHG), and 205–212 (CDSCHGEG).

It belongs to the DnaJ family. Homodimer. Requires Zn(2+) as cofactor.

The protein resides in the cytoplasm. In terms of biological role, participates actively in the response to hyperosmotic and heat shock by preventing the aggregation of stress-denatured proteins and by disaggregating proteins, also in an autonomous, DnaK-independent fashion. Unfolded proteins bind initially to DnaJ; upon interaction with the DnaJ-bound protein, DnaK hydrolyzes its bound ATP, resulting in the formation of a stable complex. GrpE releases ADP from DnaK; ATP binding to DnaK triggers the release of the substrate protein, thus completing the reaction cycle. Several rounds of ATP-dependent interactions between DnaJ, DnaK and GrpE are required for fully efficient folding. Also involved, together with DnaK and GrpE, in the DNA replication of plasmids through activation of initiation proteins. The protein is Chaperone protein DnaJ of Pseudomonas syringae pv. tomato (strain ATCC BAA-871 / DC3000).